The following is a 1114-amino-acid chain: Probable guanine nucleotide exchange factor MCF2L2 (1114 aa).

A CRAL-TRIO domain is found at 11-193 (PQELTRRLAT…ELGGTLEYRH (183 aa)). The stretch at 323 to 428 (QHFEHDFCKA…KWDILGKSLE (106 aa)) is one Spectrin repeat. Residues 530–614 (QTRPVQPVAP…NPELEQQARL (85 aa)) are disordered. Residues 546–559 (KWVSSKTSQPSTSV) show a composition bias toward polar residues. Basic and acidic residues predominate over residues 577–606 (LNSRGKEDDETKFEVKSEEIFESHHERGNP). The 204-residue stretch at 619–822 (PRRRIIRDLL…EDLIKSCELA (204 aa)) folds into the DH domain. Residues 834-954 (DIGKLGKLLL…WFSEISKLLM (121 aa)) form the PH domain. Residues 962–975 (DQGNPQFEMSTSKG) show a composition bias toward polar residues. A disordered region spans residues 962-1114 (DQGNPQFEMS…LRPRTSAQES (153 aa)). Positions 986–997 (NMERATTSKEDP) are enriched in basic and acidic residues. A compositionally biased stretch (acidic residues) spans 1017–1028 (TFEDCEGAEDME). Basic and acidic residues-rich tracts occupy residues 1043–1067 (DDSH…GEKE) and 1074–1084 (TATRSTEEERA).

The protein belongs to the MCF2 family. Significantly expressed in brain and modestly in pancreas, brain and testis.

Probably functions as a guanine nucleotide exchange factor. The sequence is that of Probable guanine nucleotide exchange factor MCF2L2 (MCF2L2) from Homo sapiens (Human).